We begin with the raw amino-acid sequence, 546 residues long: MLSRSLNKVVTSIKSSSIIRMSSATAAATSAPTANAANALKASKAPKKGKLQVSLKTPKGTKDWADSDMVIREAIFSTLSGLFKKHGGVTIDTPVFELREILAGKYGEDSKLIYNLEDQGGELCSLRYDLTVPFARYVAMNNIQSIKRYHIAKVYRRDQPAMTKGRMREFYQCDFDVAGTFESMVPDSECLSILVEGLTSLGIKDFKIKLNHRKILDGIFQIAGVKDEDVRKISSAVDKLDKSPWEAVKKEMTEEKGQSEETADKIGEYVKLNGSLKEIHAVLSADANITSNEKAKQGLDDIATLMKYTEAFDIDSFISFDLSLARGLDYYTGLIYEVVTSASAPPENASELKKKAKSAEDASEFVGVGSIAAGGRYDNLVNMFSEASGKKSTQIPCVGISFGVERIFSLIKQRINSSTTIKPTATQVFVMAFGGGKDWTGYLPERMKVTKQLWDAGIEAEYVYKAKANPRKQFDAAEKAGCHIAVILGKEEYLEGKLRVKRLGQEFADDDGELVSAADIVPIVQEKLSQIHEDGLNEVTRLIKGL.

The N-terminal 20 residues, 1-20 (MLSRSLNKVVTSIKSSSIIR), are a transit peptide targeting the mitochondrion. Residues 129–131 (DLT), R156, Q172, D176, R326, and 330–331 (YY) contribute to the L-histidine site.

This sequence belongs to the class-II aminoacyl-tRNA synthetase family.

It localises to the cytoplasm. The protein resides in the mitochondrion. It catalyses the reaction tRNA(His) + L-histidine + ATP = L-histidyl-tRNA(His) + AMP + diphosphate + H(+). Its function is as follows. Catalyzes the aminoacylation of histidyl-tRNA in both the cytoplasm and the mitochondrion. This is Histidine--tRNA ligase, mitochondrial (HTS1) from Saccharomyces cerevisiae (strain ATCC 204508 / S288c) (Baker's yeast).